A 179-amino-acid polypeptide reads, in one-letter code: Adenine phosphoribosyltransferase (179 aa).

Belongs to the purine/pyrimidine phosphoribosyltransferase family. As to quaternary structure, homodimer.

It is found in the cytoplasm. It carries out the reaction AMP + diphosphate = 5-phospho-alpha-D-ribose 1-diphosphate + adenine. The protein operates within purine metabolism; AMP biosynthesis via salvage pathway; AMP from adenine: step 1/1. In terms of biological role, catalyzes a salvage reaction resulting in the formation of AMP, that is energically less costly than de novo synthesis. In Haemophilus ducreyi (strain 35000HP / ATCC 700724), this protein is Adenine phosphoribosyltransferase.